The sequence spans 599 residues: Proline--tRNA ligase (599 aa).

The protein belongs to the class-II aminoacyl-tRNA synthetase family. ProS type 1 subfamily. Homodimer.

It is found in the cytoplasm. It catalyses the reaction tRNA(Pro) + L-proline + ATP = L-prolyl-tRNA(Pro) + AMP + diphosphate. Functionally, catalyzes the attachment of proline to tRNA(Pro) in a two-step reaction: proline is first activated by ATP to form Pro-AMP and then transferred to the acceptor end of tRNA(Pro). As ProRS can inadvertently accommodate and process non-cognate amino acids such as alanine and cysteine, to avoid such errors it has two additional distinct editing activities against alanine. One activity is designated as 'pretransfer' editing and involves the tRNA(Pro)-independent hydrolysis of activated Ala-AMP. The other activity is designated 'posttransfer' editing and involves deacylation of mischarged Ala-tRNA(Pro). The misacylated Cys-tRNA(Pro) is not edited by ProRS. This Prochlorococcus marinus (strain MIT 9313) protein is Proline--tRNA ligase.